We begin with the raw amino-acid sequence, 100 residues long: Nucleoid-associated protein Caur_0522 (100 aa).

Belongs to the YbaB/EbfC family. Homodimer.

It localises to the cytoplasm. The protein localises to the nucleoid. In terms of biological role, binds to DNA and alters its conformation. May be involved in regulation of gene expression, nucleoid organization and DNA protection. This chain is Nucleoid-associated protein Caur_0522, found in Chloroflexus aurantiacus (strain ATCC 29366 / DSM 635 / J-10-fl).